The chain runs to 375 residues: Protein arginine N-methyltransferase 6 (375 aa).

The interval 1–38 is disordered; it reads MSQPKKRKLESGGGGEGGEGTEEEDGAEREAALERPRR. The residue at position 21 (threonine 21) is a Phosphothreonine. Residues 28-38 are compositionally biased toward basic and acidic residues; sequence EREAALERPRR. Residues arginine 29, arginine 35, and arginine 37 each carry the asymmetric dimethylarginine; by autocatalysis modification. The 331-residue stretch at 44 to 374 folds into the SAM-dependent MTase PRMT-type domain; that stretch reads DQLYYECYSD…EEKTKDFAME (331 aa). Residues histidine 57, arginine 66, glycine 90, glutamate 112, and glutamate 141 each coordinate S-adenosyl-L-methionine. Residues glutamate 155 and glutamate 164 contribute to the active site.

Belongs to the class I-like SAM-binding methyltransferase superfamily. Protein arginine N-methyltransferase family. PRMT6 subfamily. Interacts with EPB41L3 and NCOA1. In terms of assembly, (Microbial infection) Interacts with (and methylates) HIV-1 Tat, Rev and Nucleocapsid protein p7 (NC). As to quaternary structure, (Microbial infection) Interacts with human cytomegalovirus protein UL69. In terms of processing, automethylation enhances its stability and antiretroviral activity. Highly expressed in kidney and testis.

Its subcellular location is the nucleus. It carries out the reaction L-arginyl-[protein] + 2 S-adenosyl-L-methionine = N(omega),N(omega)-dimethyl-L-arginyl-[protein] + 2 S-adenosyl-L-homocysteine + 2 H(+). Its function is as follows. Arginine methyltransferase that can catalyze the formation of both omega-N monomethylarginine (MMA) and asymmetrical dimethylarginine (aDMA), with a strong preference for the formation of aDMA. Preferentially methylates arginyl residues present in a glycine and arginine-rich domain and displays preference for monomethylated substrates. Specifically mediates the asymmetric dimethylation of histone H3 'Arg-2' to form H3R2me2a. H3R2me2a represents a specific tag for epigenetic transcriptional repression and is mutually exclusive with methylation on histone H3 'Lys-4' (H3K4me2 and H3K4me3). Acts as a transcriptional repressor of various genes such as HOXA2, THBS1 and TP53. Repression of TP53 blocks cellular senescence. Also methylates histone H2A and H4 'Arg-3' (H2AR3me and H4R3me, respectively). Acts as a regulator of DNA base excision during DNA repair by mediating the methylation of DNA polymerase beta (POLB), leading to the stimulation of its polymerase activity by enhancing DNA binding and processivity. Methylates HMGA1. Regulates alternative splicing events. Acts as a transcriptional coactivator of a number of steroid hormone receptors including ESR1, ESR2, PGR and NR3C1. Promotes fasting-induced transcriptional activation of the gluconeogenic program through methylation of the CRTC2 transcription coactivator. May play a role in innate immunity against HIV-1 in case of infection by methylating and impairing the function of various HIV-1 proteins such as Tat, Rev and Nucleocapsid protein p7 (NC). Methylates GPS2, protecting GPS2 from ubiquitination and degradation. Methylates SIRT7, inhibiting SIRT7 histone deacetylase activity and promoting mitochondria biogenesis. This is Protein arginine N-methyltransferase 6 (PRMT6) from Homo sapiens (Human).